The chain runs to 318 residues: Taste receptor type 2 member 14 (318 aa).

At 1–7 (MGGVIKN) the chain is on the extracellular side. Residues 8 to 28 (ISTFVLIVEFIIGNLGNSFIA) form a helical membrane-spanning segment. Residues 29–55 (LVNCIDWVKRRKISLVDQLLTALAISR) lie on the Cytoplasmic side of the membrane. Residues 56–76 (ISLVWLIFGSWCVSAFFPALF) form a helical membrane-spanning segment. Topologically, residues 77–87 (ATEKMFRMLTN) are extracellular. 2 residues coordinate cholesterol: T86 and W89. A helical membrane pass occupies residues 88 to 108 (IWAVTNHFSVWLATGLGTFYF). At 109-129 (LKIANFSNSIFIYLKWRVKKV) the chain is on the cytoplasmic side. The chain crosses the membrane as a helical span at residues 130–150 (VLVLLLVTSVFLFLNIALINI). The Extracellular segment spans residues 151 to 184 (HINASINGYGGNKTCSSDSNDFTRFSSLIALTSS). N153 and N162 each carry an N-linked (GlcNAc...) asparagine glycan. A180 contributes to the cholesterol binding site. Residues 185–205 (VFIFIPFILSLAIFLLLTFSL) traverse the membrane as a helical segment. Residues 206–232 (WKHCKKMQHTVKASGDASTKAHRGVMQ) are Cytoplasmic-facing. The chain crosses the membrane as a helical span at residues 233 to 253 (TVIAFLLLYPIFSLSFFIAVW). The Extracellular segment spans residues 254 to 261 (TSGWLEEN). Residues 262–282 (LIILSQVMGMAYPSCHSCILI) traverse the membrane as a helical segment. Cholesterol-binding residues include L265 and V268. Residues 283–317 (LGNKKLRQASLSVLWWLKYRFKDGEPSGHKGFRES) are Cytoplasmic-facing.

Belongs to the G-protein coupled receptor T2R family. Core component of the TAS2R14-GNAI1 complex, consisting of TAS2R14, GNAI1, GNB1 and GNG2; within the complex interacts with GNAI1. Core component of the TAS2R14-GNAT3 complex, consisting of TAS2R14, GNAT3, GNB1 and GNG2; within the complex interacts with GNAT3. Core component of the TAS2R14-GNAS2 complex, consisting of TAS2R14, GNAS2, GNB1 and GNG2; within the complex interacts with GNAS2.

The protein localises to the membrane. The catalysed reaction is Ca(2+)(in) = Ca(2+)(out). The enzyme catalyses 3',5'-cyclic AMP(in) = 3',5'-cyclic AMP(out). Its activity is regulated as follows. Basal activity is enhanced by binding to bitter tastants, such as flufenamic acid and aristolochic acid. Regulated by cholesterol in a concentration-dependent manner. Gustducin-linked G-protein coupled receptor that plays a role in the perception of bitterness. The activity of this receptor stimulates GNAT3, activating the gustducin G-protein pathway. Likely plays a role in sensing the chemical composition of the gastrointestinal content and other extra-oral tissues via the inhibitory G-protein pathways. This Pongo pygmaeus (Bornean orangutan) protein is Taste receptor type 2 member 14 (TAS2R14).